Consider the following 160-residue polypeptide: Flavodoxin (160 aa).

The Flavodoxin-like domain occupies 3-153 (ISILYSSKTG…NARIFGERIA (151 aa)).

The protein belongs to the flavodoxin family. FMN serves as cofactor.

Low-potential electron donor to a number of redox enzymes. The chain is Flavodoxin (floX) from Clostridium saccharobutylicum.